The sequence spans 872 residues: Probable GPI-anchored adhesin-like protein PGA25 (872 aa).

The first 19 residues, 1-19 (MKVTAVSSVLLTVAALTNA), serve as a signal peptide directing secretion. The segment covering 43–65 (PAAAPAAQPAAQPTTQSPADQPT) has biased composition (low complexity). Disordered regions lie at residues 43–383 (PAAA…TIIP), 492–517 (KPTGSGSITVLPTKSTTTDDDDDETD), and 623–809 (PDDW…ECDT). Residues 66-83 (VQSPVSSDQPSTAQPVAQ) are compositionally biased toward polar residues. 2 stretches are compositionally biased toward low complexity: residues 84–110 (NNLLLDSSNSTLVVPSSSKSSTTTRST) and 125–171 (SSEA…SSSS). An N-linked (GlcNAc...) asparagine glycan is attached at N92. A compositionally biased stretch (acidic residues) spans 196–207 (ETDDEDCVEETE). 3 stretches are compositionally biased toward low complexity: residues 208–225 (SPTSAPASAPTTSKVATT), 242–260 (SSAPISSAESSPTVASSTT), and 274–293 (SSVPSSSAETSTTVASNTTT). Residue N290 is glycosylated (N-linked (GlcNAc...) asparagine). Acidic residues predominate over residues 317–328 (AEEDDEECEDPT). Residues 349–363 (TSQSKTSVSSVVSKS) are compositionally biased toward low complexity. Positions 366–376 (EDDDDETECET) are enriched in acidic residues. Over residues 495–506 (GSGSITVLPTKS) the composition is skewed to polar residues. Composition is skewed to acidic residues over residues 624 to 635 (DDWEDDGYEGED) and 646 to 659 (DDGEWEWYEEDDGE). Gly residues-rich tracts occupy residues 666 to 692 (SSSGSGTGSWWGSGAGSSGGTTSGSGS), 701 to 710 (SSGGTWGGSG), and 731 to 740 (SWWGGSGSGS). The span at 741–760 (SSGSSSGVSSGDSGSSSVTG) shows a compositional bias: low complexity. Over residues 761 to 771 (GSSGSWWGGSG) the composition is skewed to gly residues. Over residues 780–808 (DGYDDEDDQTPEPECDDEDDSWDDDEECD) the composition is skewed to acidic residues. A845 carries the GPI-anchor amidated alanine lipid modification. Residues 846 to 872 (QSVTQIENIGGKVSASGLFVVLGLLLI) constitute a propeptide, removed in mature form.

The protein belongs to the HYR1/IFF family. The GPI-anchor is attached to the protein in the endoplasmic reticulum and serves to target the protein to the cell surface. There, the glucosamine-inositol phospholipid moiety is cleaved off and the GPI-modified mannoprotein is covalently attached via its lipidless GPI glycan remnant to the 1,6-beta-glucan of the outer cell wall layer.

Its subcellular location is the secreted. The protein resides in the cell wall. The protein localises to the membrane. Its function is as follows. Probable GPI-anchored cell wall protein involved in cell wall organization, hyphal growth, as well as in host-fungal interaction and virulence. This is Probable GPI-anchored adhesin-like protein PGA25 (PGA25) from Candida albicans (strain SC5314 / ATCC MYA-2876) (Yeast).